We begin with the raw amino-acid sequence, 357 residues long: Set1 complex component swd2 (357 aa).

4 WD repeats span residues 24-65 (NFVG…KSLA), 110-149 (GHKQTVTSIDVSPADETFLSASLDNTIRLWDLRSPNCQGL), 199-241 (PPHV…RVPS), and 247-289 (TQDG…QTVN).

The protein belongs to the WD repeat SWD2 family. Component of the Set1 complex composed of ash2, sdc1, set1, shg1, spp1, swd1, swd2 and swd3.

It is found in the nucleus. The Set1 complex specifically methylates 'Lys-4' of histone H3. This chain is Set1 complex component swd2, found in Schizosaccharomyces pombe (strain 972 / ATCC 24843) (Fission yeast).